We begin with the raw amino-acid sequence, 218 residues long: Small ribosomal subunit protein uS3 (218 aa).

Positions 39–107 (IRDYIKSKLL…QISINIVEIK (69 aa)) constitute a KH type-2 domain.

The protein belongs to the universal ribosomal protein uS3 family. Part of the 30S ribosomal subunit. Forms a tight complex with proteins S10 and S14.

Its function is as follows. Binds the lower part of the 30S subunit head. Binds mRNA in the 70S ribosome, positioning it for translation. In Desulforudis audaxviator (strain MP104C), this protein is Small ribosomal subunit protein uS3.